The following is a 465-amino-acid chain: tRNA (guanine(37)-N(1))-methyltransferase (465 aa).

S-adenosyl-L-methionine is bound by residues His-189, 227-228 (DL), and 255-256 (DA). Positions 283–362 (YPKEGVPANE…GPGPPPSKPW (80 aa)) are disordered. Over residues 291-320 (NENSSSNGNHNDVREGSQNGANESSVASTT) the composition is skewed to polar residues. Over residues 343–352 (TKRRNNKRVR) the composition is skewed to basic residues. Asn-371 contributes to the S-adenosyl-L-methionine binding site.

It belongs to the class I-like SAM-binding methyltransferase superfamily. TRM5/TYW2 family. In terms of assembly, monomer.

It localises to the mitochondrion matrix. Its subcellular location is the nucleus. The protein resides in the cytoplasm. The catalysed reaction is guanosine(37) in tRNA + S-adenosyl-L-methionine = N(1)-methylguanosine(37) in tRNA + S-adenosyl-L-homocysteine + H(+). Its function is as follows. Specifically methylates the N1 position of guanosine-37 in various cytoplasmic and mitochondrial tRNAs. Methylation is not dependent on the nature of the nucleoside 5' of the target nucleoside. This is the first step in the biosynthesis of wybutosine (yW), a modified base adjacent to the anticodon of tRNAs and required for accurate decoding. The polypeptide is tRNA (guanine(37)-N(1))-methyltransferase (Sorghum bicolor (Sorghum)).